A 215-amino-acid polypeptide reads, in one-letter code: CUE domain-containing protein 4, mitochondrial (215 aa).

The N-terminal 29 residues, 1–29, are a transit peptide targeting the mitochondrion; that stretch reads MQPEQLAGCAVVLTVTVLTLRWMFRVDKG. Residues 48–90 enclose the CUE domain; the sequence is VNSEHVHLVKTVFPHLESSAIAYDLQKTKNVDATIENALRGQP. A disordered region spans residues 109 to 191; the sequence is GAGASSHSEE…KEREELFRKR (83 aa). 2 stretches are compositionally biased toward low complexity: residues 122 to 140 and 153 to 165; these read SHEV…SLAS and SSRI…SSSS. Residues 180–191 show a composition bias toward basic and acidic residues; sequence SKKEREELFRKR.

The protein localises to the mitochondrion. This chain is CUE domain-containing protein 4, mitochondrial, found in Schizosaccharomyces pombe (strain 972 / ATCC 24843) (Fission yeast).